The chain runs to 354 residues: MLVLGIESSCDETGVALYDTERGLRAHCLHTQMAMHAEYGGVVPELASRDHIRRLVPLTEGCLAQAGASYGDIDAVAFTQGPGLGGALLAGSSYANALALALDKPVIPVHHLEGHLLSPLLAEEKPDFPFVALLVSGGHTQIMAVRGIGDYALLGESVDDAAGEAFDKTAKLLGLPYPGGAKLSELAESGRPEAFVFPRPMIHSDDLQMSFSGLKTAVLTAVEKVRAENGADDIPEQTRNDICRAFQDAVVDVLAAKVKKALLQTGFRTVVVAGGVGANRKLRETFGNMTVQIPTPKGKPKHPSEKVSVFFPPTAYCTDNGAMIAFAGAMHLGKGREVGAFNVRPRWPLSEIVR.

Histidine 111 and histidine 115 together coordinate Fe cation. Residues 134-138, aspartate 167, glycine 180, and asparagine 279 each bind substrate; that span reads LVSGG. Residue aspartate 319 coordinates Fe cation.

Belongs to the KAE1 / TsaD family. The cofactor is Fe(2+).

It localises to the cytoplasm. It carries out the reaction L-threonylcarbamoyladenylate + adenosine(37) in tRNA = N(6)-L-threonylcarbamoyladenosine(37) in tRNA + AMP + H(+). In terms of biological role, required for the formation of a threonylcarbamoyl group on adenosine at position 37 (t(6)A37) in tRNAs that read codons beginning with adenine. Is involved in the transfer of the threonylcarbamoyl moiety of threonylcarbamoyl-AMP (TC-AMP) to the N6 group of A37, together with TsaE and TsaB. TsaD likely plays a direct catalytic role in this reaction. This chain is tRNA N6-adenosine threonylcarbamoyltransferase, found in Neisseria meningitidis serogroup A / serotype 4A (strain DSM 15465 / Z2491).